The following is a 21-amino-acid chain: Thylakoid lumenal 13.8 kDa protein (21 aa).

It is found in the plastid. It localises to the chloroplast thylakoid lumen. In Spinacia oleracea (Spinach), this protein is Thylakoid lumenal 13.8 kDa protein.